We begin with the raw amino-acid sequence, 333 residues long: Acetyltransferase Pat (333 aa).

Residues 85-88 (GEIA), 95-96 (RT), and arginine 135 contribute to the 3',5'-cyclic AMP site. An N-acetyltransferase domain is found at 153–317 (FYLRPVLPGD…DTVPFEPELI (165 aa)). Residue glutamate 211 participates in Mg(2+) binding. Substrate contacts are provided by residues 237–239 (FTV), 245–250 (GRGIGS), asparagine 276, and arginine 285.

As to quaternary structure, homodimer. It depends on Mg(2+) as a cofactor.

Allosterically regulated by cAMP. Functionally, catalyzes specifically the acetylation of the epsilon-amino group of a highly conserved lysine residue in acetyl-CoA synthetase (ACS) and of the universal stress protein (USP) MSMEG_4207. Acetylation results in the inactivation of ACS activity and could be important for mycobacteria to adjust to environmental changes. This Mycolicibacterium smegmatis (strain ATCC 700084 / mc(2)155) (Mycobacterium smegmatis) protein is Acetyltransferase Pat.